Here is a 134-residue protein sequence, read N- to C-terminus: MRLGRRTSKQEEAQIDLTSMLDIVFIMLIFFIVTSSFVRESGVEVNRPTAAHAVSQKQAGIFVAITAANDIYIDKRQVDVERVQATLEHLLLDQPDASLVIQADEHAFNGTVVKVMDAAKGAGVKSIALAAEKP.

Residues 1–17 (MRLGRRTSKQEEAQIDL) lie on the Cytoplasmic side of the membrane. The helical transmembrane segment at 18-38 (TSMLDIVFIMLIFFIVTSSFV) threads the bilayer. The Periplasmic portion of the chain corresponds to 39 to 134 (RESGVEVNRP…KSIALAAEKP (96 aa)).

This sequence belongs to the ExbD/TolR family. As to quaternary structure, the accessory proteins ExbB and ExbD seem to form a complex with TonB.

The protein localises to the cell inner membrane. Its function is as follows. Involved in the TonB-dependent energy-dependent transport of various receptor-bound substrates. This chain is Biopolymer transport protein exbD2 (exbD2), found in Vibrio cholerae serotype O1 (strain ATCC 39315 / El Tor Inaba N16961).